A 457-amino-acid polypeptide reads, in one-letter code: Oxysterol-binding protein-related protein 3C (457 aa).

Disordered stretches follow at residues 37-61 and 363-393; these read NEGV…KGRW and QGDL…KGQK. Composition is skewed to basic and acidic residues over residues 47 to 61 and 370 to 391; these read GGKE…KGRW and GSEK…ETKG.

This sequence belongs to the OSBP family. Expressed in roots, leaves, stems and flowers.

In terms of biological role, may be involved in the transport of sterols. The protein is Oxysterol-binding protein-related protein 3C (ORP3C) of Arabidopsis thaliana (Mouse-ear cress).